The primary structure comprises 378 residues: UDP-N-acetylglucosamine 2-epimerase (378 aa).

Residue histidine 214 is part of the active site.

This sequence belongs to the UDP-N-acetylglucosamine 2-epimerase family.

It catalyses the reaction UDP-N-acetyl-alpha-D-glucosamine = UDP-N-acetyl-alpha-D-mannosamine. The protein operates within bacterial outer membrane biogenesis; LPS O-antigen biosynthesis. The chain is UDP-N-acetylglucosamine 2-epimerase (rfbC) from Salmonella borreze.